A 62-amino-acid polypeptide reads, in one-letter code: Phylloseptin-Az7 (62 aa).

The first 19 residues, 1-19, serve as a signal peptide directing secretion; sequence LKKSLFLVLFLGLVSLSIC. The propeptide occupies 20-40; sequence EEEKRETEEKENEQEDDKSEE. Phe-61 is subject to Phenylalanine amide.

This sequence belongs to the frog skin active peptide (FSAP) family. Phylloseptin subfamily. In terms of tissue distribution, expressed by the skin glands.

The protein localises to the secreted. Has antimicrobial activity. In Pithecopus azureus (Orange-legged monkey tree frog), this protein is Phylloseptin-Az7 (psn15).